A 141-amino-acid polypeptide reads, in one-letter code: MEMFQGLLLWLLLGVAGVWASRGPLRPLCQPINATLAAEKEACPVCITFTTSICAGYCPSMKRVLPVILPPMPQRVCTYHELRFASVRLPGCPPGVDPMVSFPVALSCHCGPCRLSSTDCGGPRTQPLACDHPPLPDILFL.

A signal peptide spans 1–20 (MEMFQGLLLWLLLGVAGVWA). Disulfide bonds link Cys29-Cys77, Cys43-Cys92, Cys46-Cys130, Cys54-Cys108, Cys58-Cys110, and Cys113-Cys120. Asn33 carries an N-linked (GlcNAc...) asparagine glycan.

This sequence belongs to the glycoprotein hormones subunit beta family. As to quaternary structure, heterodimer of a common alpha chain and a unique beta chain which confers biological specificity to thyrotropin, lutropin, follitropin and gonadotropin.

It localises to the secreted. In terms of biological role, promotes spermatogenesis and ovulation by stimulating the testes and ovaries to synthesize steroids. The sequence is that of Lutropin subunit beta (LHB) from Bos taurus (Bovine).